The following is a 607-amino-acid chain: Elongation factor 4 (607 aa).

The tr-type G domain maps to 11–193 (KNIRNFSIIA…KIVEVVPPPE (183 aa)). Residues 23-28 (DHGKST) and 140-143 (NKID) each bind GTP.

The protein belongs to the TRAFAC class translation factor GTPase superfamily. Classic translation factor GTPase family. LepA subfamily.

Its subcellular location is the cell membrane. The enzyme catalyses GTP + H2O = GDP + phosphate + H(+). Functionally, required for accurate and efficient protein synthesis under certain stress conditions. May act as a fidelity factor of the translation reaction, by catalyzing a one-codon backward translocation of tRNAs on improperly translocated ribosomes. Back-translocation proceeds from a post-translocation (POST) complex to a pre-translocation (PRE) complex, thus giving elongation factor G a second chance to translocate the tRNAs correctly. Binds to ribosomes in a GTP-dependent manner. This is Elongation factor 4 from Staphylococcus saprophyticus subsp. saprophyticus (strain ATCC 15305 / DSM 20229 / NCIMB 8711 / NCTC 7292 / S-41).